The chain runs to 322 residues: Phosphatidylserine decarboxylase proenzyme (322 aa).

Active-site charge relay system; for autoendoproteolytic cleavage activity residues include Asp90, His147, and Ser254. Ser254 functions as the Schiff-base intermediate with substrate; via pyruvic acid; for decarboxylase activity in the catalytic mechanism. Residue Ser254 is modified to Pyruvic acid (Ser); by autocatalysis. A disordered region spans residues 294–322; sequence EVEPVPLPEEEIKAEHDASPLVDDKKDET. Positions 303-322 are enriched in basic and acidic residues; the sequence is EEIKAEHDASPLVDDKKDET.

Belongs to the phosphatidylserine decarboxylase family. PSD-B subfamily. Prokaryotic type I sub-subfamily. Heterodimer of a large membrane-associated beta subunit and a small pyruvoyl-containing alpha subunit. The cofactor is pyruvate. Is synthesized initially as an inactive proenzyme. Formation of the active enzyme involves a self-maturation process in which the active site pyruvoyl group is generated from an internal serine residue via an autocatalytic post-translational modification. Two non-identical subunits are generated from the proenzyme in this reaction, and the pyruvate is formed at the N-terminus of the alpha chain, which is derived from the carboxyl end of the proenzyme. The autoendoproteolytic cleavage occurs by a canonical serine protease mechanism, in which the side chain hydroxyl group of the serine supplies its oxygen atom to form the C-terminus of the beta chain, while the remainder of the serine residue undergoes an oxidative deamination to produce ammonia and the pyruvoyl prosthetic group on the alpha chain. During this reaction, the Ser that is part of the protease active site of the proenzyme becomes the pyruvoyl prosthetic group, which constitutes an essential element of the active site of the mature decarboxylase.

The protein localises to the cell membrane. The catalysed reaction is a 1,2-diacyl-sn-glycero-3-phospho-L-serine + H(+) = a 1,2-diacyl-sn-glycero-3-phosphoethanolamine + CO2. The protein operates within phospholipid metabolism; phosphatidylethanolamine biosynthesis; phosphatidylethanolamine from CDP-diacylglycerol: step 2/2. In terms of biological role, catalyzes the formation of phosphatidylethanolamine (PtdEtn) from phosphatidylserine (PtdSer). This chain is Phosphatidylserine decarboxylase proenzyme, found in Salmonella arizonae (strain ATCC BAA-731 / CDC346-86 / RSK2980).